Reading from the N-terminus, the 299-residue chain is ATP phosphoribosyltransferase (299 aa).

The protein belongs to the ATP phosphoribosyltransferase family. Long subfamily. In terms of assembly, equilibrium between an active dimeric form, an inactive hexameric form and higher aggregates. Interconversion between the various forms is largely reversible and is influenced by the natural substrates and inhibitors of the enzyme. It depends on Mg(2+) as a cofactor.

Its subcellular location is the cytoplasm. It carries out the reaction 1-(5-phospho-beta-D-ribosyl)-ATP + diphosphate = 5-phospho-alpha-D-ribose 1-diphosphate + ATP. The protein operates within amino-acid biosynthesis; L-histidine biosynthesis; L-histidine from 5-phospho-alpha-D-ribose 1-diphosphate: step 1/9. Its activity is regulated as follows. Feedback inhibited by histidine. Its function is as follows. Catalyzes the condensation of ATP and 5-phosphoribose 1-diphosphate to form N'-(5'-phosphoribosyl)-ATP (PR-ATP). Has a crucial role in the pathway because the rate of histidine biosynthesis seems to be controlled primarily by regulation of HisG enzymatic activity. This is ATP phosphoribosyltransferase from Yersinia pseudotuberculosis serotype O:1b (strain IP 31758).